Consider the following 185-residue polypeptide: MSEDPQSWSKERKNCERVKRALMSQSPVIIFLKTALDRLNCNIEAKDISCQPCDAQSTGGYIPGKGIVLCENRLYTKKMAENTIAHEMIHMFDDHRFEVDWNNLRHQACSEIRASSMSGECRWTKELRFGNIKTFRKHHQECVKRRATISVQGNPNCKSKEQAEAIVEEVFNSCFNDFRPFEKIY.

H86 contacts a divalent metal cation. E87 is an active-site residue. A divalent metal cation is bound at residue H90.

Belongs to the peptidase M76 family.

It is found in the mitochondrion inner membrane. Functionally, has a dual role in the assembly of mitochondrial ATPase. Acts as a protease that removes N-terminal residues of mitochondrial ATPase CF(0) subunit 6 at the intermembrane space side. Also involved in the correct assembly of the membrane-embedded ATPase CF(0) particle, probably mediating association of subunit 6 with the subunit 9 ring. The polypeptide is Mitochondrial inner membrane protease atp23 (atp23) (Schizosaccharomyces pombe (strain 972 / ATCC 24843) (Fission yeast)).